The sequence spans 467 residues: Asparagine--tRNA ligase (467 aa).

It belongs to the class-II aminoacyl-tRNA synthetase family. As to quaternary structure, homodimer.

The protein localises to the cytoplasm. The enzyme catalyses tRNA(Asn) + L-asparagine + ATP = L-asparaginyl-tRNA(Asn) + AMP + diphosphate + H(+). The sequence is that of Asparagine--tRNA ligase from Haemophilus influenzae (strain PittEE).